The following is a 351-amino-acid chain: Ribosomal RNA large subunit methyltransferase M (351 aa).

Residues Ser186, 219 to 222 (APGG), Asp238, Asp258, and Asp274 contribute to the S-adenosyl-L-methionine site. The active-site Proton acceptor is the Lys303.

This sequence belongs to the class I-like SAM-binding methyltransferase superfamily. RNA methyltransferase RlmE family. RlmM subfamily. As to quaternary structure, monomer.

It is found in the cytoplasm. The catalysed reaction is cytidine(2498) in 23S rRNA + S-adenosyl-L-methionine = 2'-O-methylcytidine(2498) in 23S rRNA + S-adenosyl-L-homocysteine + H(+). In terms of biological role, catalyzes the 2'-O-methylation at nucleotide C2498 in 23S rRNA. The chain is Ribosomal RNA large subunit methyltransferase M from Xylella fastidiosa (strain 9a5c).